The following is a 92-amino-acid chain: Small ribosomal subunit protein uS17 (92 aa).

It belongs to the universal ribosomal protein uS17 family. In terms of assembly, part of the 30S ribosomal subunit.

Functionally, one of the primary rRNA binding proteins, it binds specifically to the 5'-end of 16S ribosomal RNA. This Bordetella petrii (strain ATCC BAA-461 / DSM 12804 / CCUG 43448) protein is Small ribosomal subunit protein uS17.